A 154-amino-acid chain; its full sequence is Snaclec dabocetin subunit alpha (154 aa).

The signal sequence occupies residues 1 to 23 (MGRFISVSFGLLVVFLSLSGTGA). Intrachain disulfides connect C25–C36, C53–C148, and C123–C140. One can recognise a C-type lectin domain in the interval 32-149 (HEGHCYKVFK…CGDKNPFICK (118 aa)).

The protein belongs to the snaclec family. As to quaternary structure, heterodimer of subunits alpha and beta; disulfide-linked. In terms of tissue distribution, expressed by the venom gland.

Its subcellular location is the secreted. Functionally, inhibits ristocetin-induced platelet aggregation via binding to platelet glycoprotein Ibalpha (GP1BA). This Daboia siamensis (Eastern Russel's viper) protein is Snaclec dabocetin subunit alpha.